The chain runs to 146 residues: D-aminoacyl-tRNA deacylase (146 aa).

The Gly-cisPro motif, important for rejection of L-amino acids motif lies at 137 to 138 (GP).

This sequence belongs to the DTD family. Homodimer.

The protein localises to the cytoplasm. The enzyme catalyses glycyl-tRNA(Ala) + H2O = tRNA(Ala) + glycine + H(+). It catalyses the reaction a D-aminoacyl-tRNA + H2O = a tRNA + a D-alpha-amino acid + H(+). An aminoacyl-tRNA editing enzyme that deacylates mischarged D-aminoacyl-tRNAs. Also deacylates mischarged glycyl-tRNA(Ala), protecting cells against glycine mischarging by AlaRS. Acts via tRNA-based rather than protein-based catalysis; rejects L-amino acids rather than detecting D-amino acids in the active site. By recycling D-aminoacyl-tRNA to D-amino acids and free tRNA molecules, this enzyme counteracts the toxicity associated with the formation of D-aminoacyl-tRNA entities in vivo and helps enforce protein L-homochirality. This chain is D-aminoacyl-tRNA deacylase, found in Shouchella clausii (strain KSM-K16) (Alkalihalobacillus clausii).